A 92-amino-acid chain; its full sequence is UPF0473 protein Cbei_1107 (92 aa).

The protein belongs to the UPF0473 family.

This Clostridium beijerinckii (strain ATCC 51743 / NCIMB 8052) (Clostridium acetobutylicum) protein is UPF0473 protein Cbei_1107.